We begin with the raw amino-acid sequence, 446 residues long: Cobalamin biosynthesis protein CbiHC (446 aa).

The cobalt-factor III C(17)-methyltransferase stretch occupies residues 1–246 (MLLLPSRGKL…MFTPRGYSNK (246 aa)). Residues 247-446 (YNIGEKRRAE…CLIEHADRPD (200 aa)) form a cobalt-precorrin-8 methylmutase region.

In the N-terminal section; belongs to the precorrin methyltransferase family. This sequence in the C-terminal section; belongs to the CobH family.

It carries out the reaction Co(II)-factor III + S-adenosyl-L-methionine + H(+) = Co(II)-factor IV + S-adenosyl-L-homocysteine. The catalysed reaction is Co-precorrin-8X = cob(II)yrinate. It functions in the pathway cofactor biosynthesis; adenosylcobalamin biosynthesis; cob(II)yrinate a,c-diamide from sirohydrochlorin (anaerobic route): step 3/10. It participates in cofactor biosynthesis; adenosylcobalamin biosynthesis; cob(II)yrinate a,c-diamide from sirohydrochlorin (anaerobic route): step 9/10. Bifunctional enzyme with a methyltransferase domain that catalyzes the ring contraction and methylation of C-17 in cobalt-factor III to form cobalt-factor IV, and an isomerase domain that catalyzes the conversion of cobalt-precorrin-8 to cobyrinate. This chain is Cobalamin biosynthesis protein CbiHC (cbiHC), found in Archaeoglobus fulgidus (strain ATCC 49558 / DSM 4304 / JCM 9628 / NBRC 100126 / VC-16).